A 766-amino-acid polypeptide reads, in one-letter code: Pentatricopeptide repeat-containing protein At5g28460 (766 aa).

PPR repeat units lie at residues Thr-151 to Asn-181, Asn-184 to Phe-218, Asn-221 to Pro-257, Asn-258 to Leu-292, Glu-293 to Pro-327, Asp-328 to Lys-358, Asp-369 to Pro-404, Asn-405 to Pro-439, Asn-440 to Gly-474, Asn-475 to Pro-509, Asp-510 to Leu-544, Asp-545 to Pro-579, Asp-580 to Pro-614, Thr-615 to Pro-650, Asn-651 to Pro-685, and Asn-686 to Pro-720.

This sequence belongs to the PPR family. P subfamily.

This is Pentatricopeptide repeat-containing protein At5g28460 from Arabidopsis thaliana (Mouse-ear cress).